Here is a 417-residue protein sequence, read N- to C-terminus: NADP-specific glutamate dehydrogenase A1 (417 aa).

Lysine 105 is an active-site residue.

Belongs to the Glu/Leu/Phe/Val dehydrogenases family. As to quaternary structure, homohexamer.

It carries out the reaction L-glutamate + NADP(+) + H2O = 2-oxoglutarate + NH4(+) + NADPH + H(+). The protein is NADP-specific glutamate dehydrogenase A1 (gdhA1) of Halobacterium salinarum (Halobacterium halobium).